The primary structure comprises 433 residues: Histidine--tRNA ligase (433 aa).

The protein belongs to the class-II aminoacyl-tRNA synthetase family. In terms of assembly, homodimer.

Its subcellular location is the cytoplasm. The catalysed reaction is tRNA(His) + L-histidine + ATP = L-histidyl-tRNA(His) + AMP + diphosphate + H(+). The sequence is that of Histidine--tRNA ligase from Pseudothermotoga lettingae (strain ATCC BAA-301 / DSM 14385 / NBRC 107922 / TMO) (Thermotoga lettingae).